We begin with the raw amino-acid sequence, 395 residues long: Beta-1,4-galactosyltransferase 3 (395 aa).

The Cytoplasmic segment spans residues 1–10; that stretch reads MLRRLLERPC. Residues 11–31 traverse the membrane as a helical; Signal-anchor for type II membrane protein segment; the sequence is TLALLVGSQLAVMMYLSLGGF. Residues 32-395 are Lumenal-facing; it reads RSLSALFGRD…ANHTAPHGSH (364 aa). N-linked (GlcNAc...) asparagine glycosylation occurs at asparagine 57. Cysteine 79 and cysteine 121 are joined by a disulfide. Residues 132 to 136, 171 to 173, 198 to 199, tyrosine 228, and tryptophan 260 contribute to the UDP-alpha-D-galactose site; these read PHRAR, FNR, and VD. Cysteine 192 and cysteine 211 are oxidised to a cystine. Mn(2+) is bound at residue aspartate 199. 262 to 265 provides a ligand contact to N-acetyl-D-glucosamine; that stretch reads GEDD. Histidine 293 contacts Mn(2+). Position 293–295 (293–295) interacts with UDP-alpha-D-galactose; the sequence is HRG. Arginine 305 is an N-acetyl-D-glucosamine binding site. Asparagine 339 and asparagine 387 each carry an N-linked (GlcNAc...) asparagine glycan. Residues 341–395 are disordered; sequence TADIGTDPRGPRAPSGPRYPPGSSQAFRQEMLQRRPPARPGPLPTANHTAPHGSH.

It belongs to the glycosyltransferase 7 family. Mn(2+) serves as cofactor.

The protein resides in the golgi apparatus. The protein localises to the golgi stack membrane. The enzyme catalyses an N-acetyl-beta-D-glucosaminyl derivative + UDP-alpha-D-galactose = a beta-D-galactosyl-(1-&gt;4)-N-acetyl-beta-D-glucosaminyl derivative + UDP + H(+). The catalysed reaction is N-acetyl-D-glucosamine + UDP-alpha-D-galactose = beta-D-galactosyl-(1-&gt;4)-N-acetyl-D-glucosamine + UDP + H(+). It catalyses the reaction a beta-D-GlcNAc-(1-&gt;3)-beta-D-Gal-(1-&gt;4)-beta-D-Glc-(1&lt;-&gt;1)-Cer(d18:1(4E)) + UDP-alpha-D-galactose = a neolactoside nLc4Cer(d18:1(4E)) + UDP + H(+). It carries out the reaction a beta-D-glucosylceramide + UDP-alpha-D-galactose = a beta-D-galactosyl-(1-&gt;4)-beta-D-glucosyl-(1&lt;-&gt;1)-ceramide + UDP + H(+). The enzyme catalyses a neolactoside IV(3)-beta-GlcNAc-nLc4Cer + UDP-alpha-D-galactose = a neolactoside nLc6Cer + UDP + H(+). It participates in protein modification; protein glycosylation. Functionally, responsible for the synthesis of complex-type N-linked oligosaccharides in many glycoproteins as well as the carbohydrate moieties of glycolipids. This Cricetulus griseus (Chinese hamster) protein is Beta-1,4-galactosyltransferase 3 (B4GALT3).